Consider the following 100-residue polypeptide: Large ribosomal subunit protein eL21 (100 aa).

The span at 1 to 21 shows a compositional bias: basic residues; the sequence is MVKRTHGYRYKSRKLLRKKPR. The disordered stretch occupies residues 1-22; it reads MVKRTHGYRYKSRKLLRKKPRE.

It belongs to the eukaryotic ribosomal protein eL21 family.

The polypeptide is Large ribosomal subunit protein eL21 (Pyrobaculum neutrophilum (strain DSM 2338 / JCM 9278 / NBRC 100436 / V24Sta) (Thermoproteus neutrophilus)).